Here is a 307-residue protein sequence, read N- to C-terminus: Oligopeptide transport ATP-binding protein OppF (307 aa).

The region spanning 6–251 (VEVKDLEISF…PIHPYTQSLL (246 aa)) is the ABC transporter domain. Residue 42–49 (GESGSGKT) coordinates ATP.

Belongs to the ABC transporter superfamily. As to quaternary structure, the complex is composed of two ATP-binding proteins (OppD and OppF), two transmembrane proteins (OppB and OppC) and a solute-binding protein (OppA).

The protein resides in the cell membrane. The catalysed reaction is a [peptide](out) + ATP + H2O = a [peptide](in) + ADP + phosphate + H(+). In terms of biological role, part of the ABC transporter complex OppABCDF involved in the uptake of oligopeptides. Probably responsible for energy coupling to the transport system. The protein is Oligopeptide transport ATP-binding protein OppF (oppF) of Streptococcus pyogenes serotype M1.